Reading from the N-terminus, the 38-residue chain is Potassium channel toxin alpha-KTx 3.11 (38 aa).

Intrachain disulfides connect Cys8-Cys28, Cys14-Cys33, and Cys18-Cys35.

Belongs to the short scorpion toxin superfamily. Potassium channel inhibitor family. Alpha-KTx 03 subfamily. As to expression, expressed by the venom gland.

The protein resides in the secreted. In terms of biological role, blocks the voltage-gated potassium channel Kv1.3/KCNA3 (IC(50)=7.2 nM). Correnti and colleagues have also shown that this toxin inhibits Kv1.1/KCNA1, which is different from Abdel-Mottaleb and colleagues conclusions. This is Potassium channel toxin alpha-KTx 3.11 from Odontobuthus doriae (Yellow Iranian scorpion).